The primary structure comprises 492 residues: Probable glycogen synthase 2 (492 aa).

K15 serves as a coordination point for ADP-alpha-D-glucose.

This sequence belongs to the glycosyltransferase 1 family. Bacterial/plant glycogen synthase subfamily.

The enzyme catalyses [(1-&gt;4)-alpha-D-glucosyl](n) + ADP-alpha-D-glucose = [(1-&gt;4)-alpha-D-glucosyl](n+1) + ADP + H(+). It functions in the pathway glycan biosynthesis; glycogen biosynthesis. In terms of biological role, synthesizes alpha-1,4-glucan chains using ADP-glucose. This Nostoc sp. (strain PCC 7120 / SAG 25.82 / UTEX 2576) protein is Probable glycogen synthase 2 (glgA2).